We begin with the raw amino-acid sequence, 218 residues long: Adenylate kinase (218 aa).

10-15 (GVGKGT) lines the ATP pocket. The interval 30-59 (STGDMLRSAIKQGTELGLKAKSFIDKGELV) is NMP. AMP is bound by residues T31, R36, 57 to 59 (ELV), 86 to 89 (GFPR), and Q93. Positions 127-164 (GRRIAPSTGKVYHVVYNPPKVEGKCDETGEDLIIREDD) are LID. ATP-binding positions include R128 and 137-138 (VY). AMP-binding residues include R161 and R172. Q200 provides a ligand contact to ATP.

It belongs to the adenylate kinase family. As to quaternary structure, monomer.

The protein resides in the cytoplasm. It carries out the reaction AMP + ATP = 2 ADP. Its pathway is purine metabolism; AMP biosynthesis via salvage pathway; AMP from ADP: step 1/1. In terms of biological role, catalyzes the reversible transfer of the terminal phosphate group between ATP and AMP. Plays an important role in cellular energy homeostasis and in adenine nucleotide metabolism. The sequence is that of Adenylate kinase from Chloroherpeton thalassium (strain ATCC 35110 / GB-78).